A 555-amino-acid polypeptide reads, in one-letter code: CTP synthase (555 aa).

Residues 1–265 form an amidoligase domain region; it reads MTRYIFITGG…GNRVCEKLNI (265 aa). S13 contributes to the CTP binding site. A UTP-binding site is contributed by S13. ATP is bound by residues 14–19 and D71; that span reads SLGKGI. Residues D71 and E139 each contribute to the Mg(2+) site. CTP contacts are provided by residues 146–148, 186–191, and K222; these read DIE and KTKPTQ. UTP contacts are provided by residues 186–191 and K222; that span reads KTKPTQ. The 252-residue stretch at 290–541 folds into the Glutamine amidotransferase type-1 domain; that stretch reads TVAVVGKYVD…IKAGLAAKEA (252 aa). Residue G351 coordinates L-glutamine. Residue C378 is the Nucleophile; for glutamine hydrolysis of the active site. Residues 379 to 382, E402, and R469 contribute to the L-glutamine site; that span reads LGMQ. Residues H514 and E516 contribute to the active site.

It belongs to the CTP synthase family. In terms of assembly, homotetramer.

It catalyses the reaction UTP + L-glutamine + ATP + H2O = CTP + L-glutamate + ADP + phosphate + 2 H(+). The enzyme catalyses L-glutamine + H2O = L-glutamate + NH4(+). It carries out the reaction UTP + NH4(+) + ATP = CTP + ADP + phosphate + 2 H(+). The protein operates within pyrimidine metabolism; CTP biosynthesis via de novo pathway; CTP from UDP: step 2/2. With respect to regulation, allosterically activated by GTP, when glutamine is the substrate; GTP has no effect on the reaction when ammonia is the substrate. The allosteric effector GTP functions by stabilizing the protein conformation that binds the tetrahedral intermediate(s) formed during glutamine hydrolysis. Inhibited by the product CTP, via allosteric rather than competitive inhibition. Functionally, catalyzes the ATP-dependent amination of UTP to CTP with either L-glutamine or ammonia as the source of nitrogen. Regulates intracellular CTP levels through interactions with the four ribonucleotide triphosphates. The chain is CTP synthase from Coxiella burnetii (strain CbuK_Q154) (Coxiella burnetii (strain Q154)).